The chain runs to 54 residues: Rubredoxin (54 aa).

The Rubredoxin-like domain maps to Met1–Glu54. 4 residues coordinate Fe cation: Cys6, Cys9, Cys39, and Cys42.

Belongs to the rubredoxin family. Fe(3+) is required as a cofactor.

Its function is as follows. Rubredoxin is a small nonheme, iron protein lacking acid-labile sulfide. Its single Fe, chelated to 4 Cys, functions as an electron acceptor and may also stabilize the conformation of the molecule. Functions as an intermediate component in the electron transfer chain: NADH-&gt;NROR-&gt;Rd-&gt;FprA1/2 in which Rd serves as the proximal electron donor to the FDPs that exhibit H(2)O-forming NADH oxidase activity. Also functions as the proximal electron donor to the Dfx and revRbr proteins that display superoxide reductase (SOR) and NADH peroxidase activity, respectively. Therefore, is a key electron carrier in an efficient multienzyme complex that can scavenge O(2) and reactive oxygen species (ROS), and thus plays an important role in the oxidative stress defense system in C.acetobutylicum, an obligate anaerobic bacterium. This is Rubredoxin (rd) from Clostridium acetobutylicum (strain ATCC 824 / DSM 792 / JCM 1419 / IAM 19013 / LMG 5710 / NBRC 13948 / NRRL B-527 / VKM B-1787 / 2291 / W).